The sequence spans 701 residues: Elongation factor G (701 aa).

The tr-type G domain maps to 8–290; the sequence is SLYRNIGISA…AVVELLPAPT (283 aa). GTP contacts are provided by residues 17–24, 88–92, and 142–145; these read AHIDAGKT, DTPGH, and NKMD.

Belongs to the TRAFAC class translation factor GTPase superfamily. Classic translation factor GTPase family. EF-G/EF-2 subfamily.

The protein resides in the cytoplasm. Catalyzes the GTP-dependent ribosomal translocation step during translation elongation. During this step, the ribosome changes from the pre-translocational (PRE) to the post-translocational (POST) state as the newly formed A-site-bound peptidyl-tRNA and P-site-bound deacylated tRNA move to the P and E sites, respectively. Catalyzes the coordinated movement of the two tRNA molecules, the mRNA and conformational changes in the ribosome. The sequence is that of Elongation factor G from Neisseria gonorrhoeae (strain ATCC 700825 / FA 1090).